A 486-amino-acid polypeptide reads, in one-letter code: Probable cytosol aminopeptidase (486 aa).

This sequence belongs to the peptidase M17 family. Mn(2+) serves as cofactor.

The protein resides in the cytoplasm. It carries out the reaction Release of an N-terminal amino acid, Xaa-|-Yaa-, in which Xaa is preferably Leu, but may be other amino acids including Pro although not Arg or Lys, and Yaa may be Pro. Amino acid amides and methyl esters are also readily hydrolyzed, but rates on arylamides are exceedingly low.. The catalysed reaction is Release of an N-terminal amino acid, preferentially leucine, but not glutamic or aspartic acids.. Functionally, presumably involved in the processing and regular turnover of intracellular proteins. Catalyzes the removal of unsubstituted N-terminal amino acids from various peptides. The chain is Probable cytosol aminopeptidase (pepA) from Synechococcus elongatus (strain ATCC 33912 / PCC 7942 / FACHB-805) (Anacystis nidulans R2).